The sequence spans 251 residues: Ditrans,polycis-undecaprenyl-diphosphate synthase ((2E,6E)-farnesyl-diphosphate specific) (251 aa).

The active site involves D21. D21 is a binding site for Mg(2+). Substrate-binding positions include 22 to 25, W26, H38, and 66 to 68; these read GNNR and SSE. The active-site Proton acceptor is N69. Residues W70, R72, R189, and 195 to 197 contribute to the substrate site; that span reads RIS. Mg(2+) is bound at residue E208.

Belongs to the UPP synthase family. As to quaternary structure, homodimer. Mg(2+) serves as cofactor.

The catalysed reaction is 8 isopentenyl diphosphate + (2E,6E)-farnesyl diphosphate = di-trans,octa-cis-undecaprenyl diphosphate + 8 diphosphate. Catalyzes the sequential condensation of isopentenyl diphosphate (IPP) with (2E,6E)-farnesyl diphosphate (E,E-FPP) to yield (2Z,6Z,10Z,14Z,18Z,22Z,26Z,30Z,34E,38E)-undecaprenyl diphosphate (di-trans,octa-cis-UPP). UPP is the precursor of glycosyl carrier lipid in the biosynthesis of bacterial cell wall polysaccharide components such as peptidoglycan and lipopolysaccharide. This Pseudomonas putida (strain ATCC 47054 / DSM 6125 / CFBP 8728 / NCIMB 11950 / KT2440) protein is Ditrans,polycis-undecaprenyl-diphosphate synthase ((2E,6E)-farnesyl-diphosphate specific).